The chain runs to 198 residues: Protein hunchback (198 aa).

2 disordered regions span residues 16–111 (SHHH…LPGL) and 152–198 (NDKL…KYMA). Residues 17 to 31 (HHHHHHHAHHSHHQH) are compositionally biased toward basic residues. Low complexity-rich tracts occupy residues 35–46 (SNSNSNASSPHQ) and 56–83 (SNTN…QQQQ). A compositionally biased stretch (polar residues) spans 95 to 105 (PSPSNNDQNSP). Positions 179 to 198 (EPEKEHDLMSNSSEDMKYMA) are enriched in basic and acidic residues.

This sequence belongs to the hunchback C2H2-type zinc-finger protein family.

It localises to the nucleus. Gap class segmentation protein that controls development of head structures. The chain is Protein hunchback (hb) from Drosophila lineosetae (Fruit fly).